Consider the following 526-residue polypeptide: 3',5'-cyclic-nucleotide phosphodiesterase 2 (526 aa).

Positions 182 to 526 (RNIEFMSFLS…EYWMKHKKPQ (345 aa)) constitute a PDEase domain. The active-site Proton donor is H265. The a divalent metal cation site is built by H269, H302, D303, and D400.

It belongs to the cyclic nucleotide phosphodiesterase family. As to quaternary structure, monomer. A divalent metal cation is required as a cofactor.

The catalysed reaction is 3',5'-cyclic AMP + H2O = AMP + H(+). Controls the level of cAMP in yeast cells, together with the low-affinity cAMP phosphodiesterase (PDE1). This chain is 3',5'-cyclic-nucleotide phosphodiesterase 2, found in Saccharomyces cerevisiae (strain ATCC 204508 / S288c) (Baker's yeast).